The sequence spans 261 residues: Sulfur carrier protein FdhD (261 aa).

Cysteine 105 (cysteine persulfide intermediate) is an active-site residue. Mo-bis(molybdopterin guanine dinucleotide) is bound at residue 245–250 (FIRGDR).

Belongs to the FdhD family.

Its subcellular location is the cytoplasm. In terms of biological role, required for formate dehydrogenase (FDH) activity. Acts as a sulfur carrier protein that transfers sulfur from IscS to the molybdenum cofactor prior to its insertion into FDH. The sequence is that of Sulfur carrier protein FdhD from Listeria innocua serovar 6a (strain ATCC BAA-680 / CLIP 11262).